The following is a 192-amino-acid chain: HTH-type transcriptional repressor SCO4008 (192 aa).

The region spanning 7–67 is the HTH tetR-type domain; that stretch reads EATKARIFEA…SVLEKKMLDL (61 aa). A DNA-binding region (H-T-H motif) is located at residues 30–49; that stretch reads RIDRIAAEARANKQLIYAYY.

Homodimer. Four dimers bind to the two operator sites.

With respect to regulation, binding of a wide range of cationic hydrophobic compounds to SCO4008 causes a decrease in DNA-binding, probably via allosteric conformational change of SCO4008. Probably regulates the expression of its own gene and the adjacent SCO4007 gene by binding to two operator sites in the SCO4007-SCO4008 intergenic region. This chain is HTH-type transcriptional repressor SCO4008, found in Streptomyces coelicolor (strain ATCC BAA-471 / A3(2) / M145).